A 1803-amino-acid chain; its full sequence is Pyruvate dehydrogenase [NADP(+)], mitochondrial (1803 aa).

The N-terminal 37 residues, 1-37 (MKQSVRPIISNVLRKEVALYSTIIGQDKGKEPTGRTY), are a transit peptide targeting the mitochondrion. 4Fe-4S ferredoxin-type domains are found at residues 747-776 (FIPQ…PFVL) and 802-831 (FRIQ…MTDA). Positions 756, 759, 762, 766, 811, 814, 817, and 821 each coordinate [4Fe-4S] cluster. The 144-residue stretch at 1248-1391 (VTILYGSETG…GFNNWIPSVW (144 aa)) folds into the Flavodoxin-like domain. The region spanning 1425–1650 (KSTPVLSITG…IHPTAMEFPD (226 aa)) is the FAD-binding FR-type domain. Residues 1458–1469 (YQVGDSLGVFPE) and 1585–1595 (IKPRYYSISSA) each bind FAD.

The protein in the N-terminal section; belongs to the pyruvate:ferredoxin/flavodoxin oxidoreductase family. As to quaternary structure, homodimer. It depends on FAD as a cofactor. The cofactor is FMN. Requires thiamine diphosphate as cofactor. Iron-sulfur cluster is required as a cofactor.

It localises to the mitochondrion. It catalyses the reaction pyruvate + NADP(+) + CoA = acetyl-CoA + CO2 + NADPH. Functionally, pyruvate dehydrogenase [NADP(+)] is one of three enzymes participating in respiratory metabolism. The enzyme is also active with 2-oxobutyrate and oxaloacetate. The enzyme is oxygen sensitive. This is Pyruvate dehydrogenase [NADP(+)], mitochondrial (PNO) from Euglena gracilis.